Consider the following 866-residue polypeptide: Protein mono-ADP-ribosyltransferase PARP9 (866 aa).

S42 carries the phosphoserine modification. 2 Macro domains span residues 109–298 (QRVF…ESIL) and 313–492 (ASTM…TKRS). A PARP catalytic domain is found at 635 to 853 (TNQQEKLDKM…YSSGPGMVSS (219 aa)).

Belongs to the ARTD/PARP family. In terms of assembly, forms a stable complex with E3 ligase DTX3L; the interaction is required for PARP9 mediated ADP-ribosylation of ubiquitin. Interacts (via PARP catalytic domain) with DTX3L (via N-terminus). Forms a complex with STAT1 and DTX3L independently of IFNB1 or IFNG-mediated STAT1 'Tyr-701' phosphorylation. Forms a complex with STAT1, DTX3L and histone H2B H2BC9/H2BJ; the interaction is likely to induce H2BC9/H2BJ ubiquitination. Interacts (via N-terminus) with STAT1. Interacts with PARP14 in IFNG-stimulated macrophages; the interaction prevents PARP14-mediated STAT1 and STAT6 ADP-riboslylation. Interacts with PARP1 (when poly-ADP-ribosylated). Post-translationally, ADP-ribosylated by PARP14. Highly expressed in the thymus and intestine. Expressed in macrophages.

It localises to the cytoplasm. It is found in the cytosol. The protein resides in the nucleus. The catalysed reaction is [protein]-C-terminal glycine + NAD(+) = [protein]-C-terminal O-(ADP-D-ribosyl)-glycine + nicotinamide. Binding to poly(ADP-ribose) does not affect its activity. Functionally, ADP-ribosyltransferase which, in association with E3 ligase DTX3L, plays a role in DNA damage repair and in immune responses including interferon-mediated antiviral defenses. Within the complex, enhances DTX3L E3 ligase activity which is further enhanced by PARP9 binding to poly(ADP-ribose). In addition, positively regulates DTXL3 protein levels. In association with DTX3L and in presence of E1 and E2 enzymes, mediates NAD(+)-dependent mono-ADP-ribosylation of ubiquitin which prevents ubiquitin conjugation to substrates such as histones. During DNA repair, PARP1 recruits PARP9/BAL1-DTX3L complex to DNA damage sites via PARP9 binding to ribosylated PARP1. Subsequent PARP1-dependent PARP9/BAL1-DTX3L-mediated ubiquitination promotes the rapid and specific recruitment of 53BP1/TP53BP1, UIMC1/RAP80, and BRCA1 to DNA damage sites. In response to DNA damage, PARP9-DTX3L complex is required for efficient non-homologous end joining (NHEJ) but the complex function is restrained by PARP9 activity. Dispensable for B-cell receptor (BCR) assembly through V(D)J recombination and class switch recombination (CSR). In macrophages, positively regulates pro-inflammatory cytokines production in response to IFNG stimulation by suppressing PARP14-mediated STAT1 ADP-ribosylation and thus promoting STAT1 phosphorylation. Also suppresses PARP14-mediated STAT6 ADP-ribosylation. This is Protein mono-ADP-ribosyltransferase PARP9 (Parp9) from Mus musculus (Mouse).